The chain runs to 365 residues: uncharacterized protein (365 aa).

Disordered regions lie at residues 218 to 262 and 315 to 342; these read QRPS…AEAA and PRLP…RTPC. 2 stretches are compositionally biased toward basic and acidic residues: residues 239–257 and 331–341; these read PDNR…KDPE and MEFRNLSDRTP.

This is an uncharacterized protein from Mus musculus (Mouse).